A 218-amino-acid polypeptide reads, in one-letter code: Ribose-5-phosphate isomerase A (218 aa).

Substrate-binding positions include 28-31, 81-84, and 94-97; these read TGST, DGAD, and KGGG. The Proton acceptor role is filled by E103. K121 lines the substrate pocket.

This sequence belongs to the ribose 5-phosphate isomerase family. In terms of assembly, homodimer.

It carries out the reaction aldehydo-D-ribose 5-phosphate = D-ribulose 5-phosphate. The protein operates within carbohydrate degradation; pentose phosphate pathway; D-ribose 5-phosphate from D-ribulose 5-phosphate (non-oxidative stage): step 1/1. Functionally, catalyzes the reversible conversion of ribose-5-phosphate to ribulose 5-phosphate. This Pseudoalteromonas atlantica (strain T6c / ATCC BAA-1087) protein is Ribose-5-phosphate isomerase A.